A 473-amino-acid polypeptide reads, in one-letter code: Exodeoxyribonuclease I (473 aa).

Residues 9-188 (IYDYESFGVN…AMADVYATIA (180 aa)) enclose the Exonuclease domain. Positions 11, 13, and 182 each coordinate Mg(2+). A substrate-binding site is contributed by glutamate 13. The region spanning 198-353 (PKLFQYFFEN…KVADIFNEER (156 aa)) is the ExoI SH3-like domain. Residues 356–472 (ASNDNVETEL…QVYEYGIKLL (117 aa)) enclose the ExoI C-terminal domain.

In terms of assembly, monomer. Interacts with ssb (via C-terminus); this interaction stimulates the exonuclease activity by recruiting the enzyme to its substrate. Requires Mg(2+) as cofactor.

It catalyses the reaction Exonucleolytic cleavage in the 3'- to 5'-direction to yield nucleoside 5'-phosphates.. In terms of biological role, degrades single-stranded DNA (ssDNA) in a highly processive manner. Also functions as a DNA deoxyribophosphodiesterase that releases deoxyribose-phosphate moieties following the cleavage of DNA at an apurinic/apyrimidinic (AP) site by either an AP endonuclease or AP lyase. Involved in genome maintenance but probably not in phase variation, which contributes to the virulence and disease. This is Exodeoxyribonuclease I (sbcB) from Haemophilus influenzae (strain ATCC 51907 / DSM 11121 / KW20 / Rd).